The chain runs to 327 residues: Zinc finger C2HC domain-containing protein 1A (327 aa).

A C2HC/C3H-type 1 zinc finger spans residues 13–42 (ELVPCKICGRSFFPKVLKKHVPICQKTAAK). Residues cysteine 17, cysteine 20, histidine 32, and cysteine 36 each coordinate Zn(2+). Disordered stretches follow at residues 40 to 96 (AAKR…KHEE) and 108 to 131 (NQVI…DYIQ). Positions 46-56 (VFDSGRQRAEG) are enriched in basic and acidic residues. Over residues 63 to 76 (KPIKPKLQSSSSSS) the composition is skewed to low complexity. Pro residues predominate over residues 116 to 125 (PLPPPPPPSY). The C2HC/C3H-type 2 zinc-finger motif lies at 128 to 157 (DYIQCPYCQRRFGENAADRHIKFCKEQASR). Residues cysteine 132, cysteine 135, histidine 147, and cysteine 151 each coordinate Zn(2+). The segment at 154 to 271 (QASRISNKSK…NPSTGIGMNK (118 aa)) is disordered. Polar residues predominate over residues 187–199 (NSPTASSVSSRLP). A compositionally biased stretch (low complexity) spans 211–229 (GIPSSKPSSTGSIKSTPSG). 2 stretches are compositionally biased toward polar residues: residues 233–245 (LRNN…SPPS) and 255–267 (VSQS…STGI).

It belongs to the ZC2HC1 family. It depends on Zn(2+) as a cofactor.

In Danio rerio (Zebrafish), this protein is Zinc finger C2HC domain-containing protein 1A (zc2hc1a).